A 2259-amino-acid polypeptide reads, in one-letter code: Protein Ycf2 (2259 aa).

1556-1563 (GSQETGRS) provides a ligand contact to ATP.

It belongs to the Ycf2 family.

The protein resides in the plastid. The protein localises to the chloroplast stroma. Probable ATPase of unknown function. Its presence in a non-photosynthetic plant (Epifagus virginiana) and experiments in tobacco indicate that it has an essential function which is probably not related to photosynthesis. In Physcomitrium patens (Spreading-leaved earth moss), this protein is Protein Ycf2.